The sequence spans 195 residues: Interferon tau-9 (195 aa).

The signal sequence occupies residues M1–G23. Cystine bridges form between C24–C122 and C52–C162.

This sequence belongs to the alpha/beta interferon family. IFN-alphaII subfamily. Constitutively and exclusively expressed in the mononuclear cells of the extraembryonic trophectoderm.

The protein localises to the secreted. Paracrine hormone primarily responsible for maternal recognition of pregnancy. Interacts with endometrial receptors, probably type I interferon receptors, and blocks estrogen receptor expression, preventing the estrogen-induced increase in oxytocin receptor expression in the endometrium. This results in the suppression of the pulsatile endometrial release of the luteolytic hormone prostaglandin F2-alpha, hindering the regression of the corpus luteum (luteolysis) and therefore a return to ovarian cyclicity. This, and a possible direct effect of IFN-tau on prostaglandin synthesis, leads in turn to continued ovarian progesterone secretion, which stimulates the secretion by the endometrium of the nutrients required for the growth of the conceptus. In summary, displays particularly high antiviral and antiproliferative potency concurrently with particular weak cytotoxicity, high antiluteolytic activity and immunomodulatory properties. In contrast with other IFNs, IFN-tau is not virally inducible. In Ovis aries (Sheep), this protein is Interferon tau-9 (IFNT9).